A 20-amino-acid chain; its full sequence is Phylloseptin-O1 (20 aa).

Gly20 carries the post-translational modification Glycine amide.

In terms of tissue distribution, expressed by the skin glands.

It localises to the secreted. Has antiprotozoal activity against T.cruzi. This is Phylloseptin-O1 (psn4) from Pithecopus oreades (Orange-legged leaf frog).